A 389-amino-acid polypeptide reads, in one-letter code: Oxytocin receptor (389 aa).

The segment at 1 to 27 (MEGELAANWSTEAVNSSAAPPGAEGNC) is disordered. Over 1–38 (MEGELAANWSTEAVNSSAAPPGAEGNCTAGPPRRNEAL) the chain is Extracellular. Asn8, Asn15, and Asn26 each carry an N-linked (GlcNAc...) asparagine glycan. The span at 8–18 (NWSTEAVNSSA) shows a compositional bias: polar residues. A helical membrane pass occupies residues 39 to 63 (ARVEVAVLCLILFLALSGNACVLLA). Residues 64 to 74 (LRTTRHKHSRL) lie on the Cytoplasmic side of the membrane. Residues 75 to 97 (FFFMKHLSIADLVVAVFQVLPQL) form a helical membrane-spanning segment. Residues 98 to 113 (LWDITFRFYGPDLLCR) lie on the Extracellular side of the membrane. Cys112 and Cys187 are disulfide-bonded. Residues 114 to 135 (LVKYLQVVGMFASTYLLLLMSL) form a helical membrane-spanning segment. Over 136–154 (DRCLAICQPLRSLRRRTDR) the chain is Cytoplasmic. The helical transmembrane segment at 155 to 175 (LAVLATWLGCLVASAPQVHIF) threads the bilayer. Residues 176–202 (SLREVADGVFDCWAVFIQPWGPKAYIT) lie on the Extracellular side of the membrane. A helical membrane pass occupies residues 203 to 225 (WITLAVYIVPVIVLAACYGLISF). Over 226–275 (KIWQNLRLKTAAAAAAEAPEGAAAGDGGRMALARVSSVKLISKAKIRTVK) the chain is Cytoplasmic. A helical transmembrane segment spans residues 276–294 (MTFIIVLAFIVCWTPFFFV). Residues 295–309 (QMWSVWDANAPKEAS) lie on the Extracellular side of the membrane. A helical membrane pass occupies residues 310–332 (AFIIVMLLASLNSCCNPWIYMLF). Topologically, residues 333–389 (TGHLFHELVQRFLCCSASYLKGNRLGETSTSKKSNSSSFVLSHRSSSQRSCSQPSTA) are cytoplasmic. The interval 358 to 389 (GETSTSKKSNSSSFVLSHRSSSQRSCSQPSTA) is disordered. Low complexity predominate over residues 360–389 (TSTSKKSNSSSFVLSHRSSSQRSCSQPSTA). Ser366 and Ser368 each carry phosphoserine.

The protein belongs to the G-protein coupled receptor 1 family. Vasopressin/oxytocin receptor subfamily.

It is found in the cell membrane. Functionally, receptor for oxytocin. The activity of this receptor is mediated by G proteins which activate a phosphatidylinositol-calcium second messenger system. The chain is Oxytocin receptor (OXTR) from Macaca mulatta (Rhesus macaque).